Consider the following 392-residue polypeptide: Phospho-N-acetylmuramoyl-pentapeptide-transferase (392 aa).

The next 10 helical transmembrane spans lie at 24 to 44 (YLTF…LLAG), 76 to 96 (TMGG…WFDL), 100 to 120 (FVWV…VDDW), 137 to 157 (YFWQ…CISE), 193 to 213 (VSYP…IVGS), 225 to 245 (GLAI…AYVT), 262 to 282 (AGEL…FLWF), 289 to 309 (VFMG…IAII), 314 to 334 (IVLA…MLQV), and 369 to 389 (QVVV…LTTL).

It belongs to the glycosyltransferase 4 family. MraY subfamily. It depends on Mg(2+) as a cofactor.

Its subcellular location is the cell inner membrane. The enzyme catalyses UDP-N-acetyl-alpha-D-muramoyl-L-alanyl-gamma-D-glutamyl-meso-2,6-diaminopimeloyl-D-alanyl-D-alanine + di-trans,octa-cis-undecaprenyl phosphate = di-trans,octa-cis-undecaprenyl diphospho-N-acetyl-alpha-D-muramoyl-L-alanyl-D-glutamyl-meso-2,6-diaminopimeloyl-D-alanyl-D-alanine + UMP. It participates in cell wall biogenesis; peptidoglycan biosynthesis. Functionally, catalyzes the initial step of the lipid cycle reactions in the biosynthesis of the cell wall peptidoglycan: transfers peptidoglycan precursor phospho-MurNAc-pentapeptide from UDP-MurNAc-pentapeptide onto the lipid carrier undecaprenyl phosphate, yielding undecaprenyl-pyrophosphoryl-MurNAc-pentapeptide, known as lipid I. This Paracidovorax citrulli (strain AAC00-1) (Acidovorax citrulli) protein is Phospho-N-acetylmuramoyl-pentapeptide-transferase.